Here is a 236-residue protein sequence, read N- to C-terminus: 2,3,4,5-tetrahydropyridine-2,6-dicarboxylate N-acetyltransferase (236 aa).

This sequence belongs to the transferase hexapeptide repeat family. DapH subfamily.

The catalysed reaction is (S)-2,3,4,5-tetrahydrodipicolinate + acetyl-CoA + H2O = L-2-acetamido-6-oxoheptanedioate + CoA. Its pathway is amino-acid biosynthesis; L-lysine biosynthesis via DAP pathway; LL-2,6-diaminopimelate from (S)-tetrahydrodipicolinate (acetylase route): step 1/3. Catalyzes the transfer of an acetyl group from acetyl-CoA to tetrahydrodipicolinate. The protein is 2,3,4,5-tetrahydropyridine-2,6-dicarboxylate N-acetyltransferase of Clostridium botulinum (strain 657 / Type Ba4).